An 808-amino-acid polypeptide reads, in one-letter code: Protein tortoise (808 aa).

Residues 43–78 (KDRKELYSLNNDSIKKKLNQLKDETNQLLKERGEEL) are a coiled coil. The tract at residues 152 to 171 (LTSGGANKKKSPFLEDNNNK) is disordered. Residues 694 to 733 (EDLDFQIEELELMIKNKKILEREIKAHNEKISKIIKDSRD) are a coiled coil.

It localises to the mitochondrion. Functionally, required for efficient chemotaxis. The sequence is that of Protein tortoise (torA) from Dictyostelium discoideum (Social amoeba).